The following is a 1106-amino-acid chain: Putative pre-mRNA-splicing factor ATP-dependent RNA helicase DHX16 (1106 aa).

Disordered regions lie at residues 73–100 (KIQN…DKEK), 120–286 (DDIV…TKSR), and 366–394 (YIND…WEQN). The span at 78 to 94 (TSSSSSSSSTSLSSSSS) shows a compositional bias: low complexity. Residues 138 to 155 (KRKKKEKKKEKKDKKDKK) are compositionally biased toward basic residues. The segment covering 156–167 (DKKSSTRKKSDN) has biased composition (basic and acidic residues). Residues 189–201 (NNENNDNNNDNNN) are compositionally biased toward low complexity. Residues 232-283 (REQREVKELSDRIKKRDEKSTKKKIVDDSETKESIERKNRLEQNEQLETERT) are compositionally biased toward basic and acidic residues. Positions 477–640 (IDAVREYQVL…FDGAPTFNIP (164 aa)) constitute a Helicase ATP-binding domain. 490–497 (GETGSGKT) serves as a coordination point for ATP. A DEAH box motif is present at residues 587–590 (DEAH). Residues 665–838 (TVLQIHITEP…NVVLLLKSMG (174 aa)) form the Helicase C-terminal domain.

The protein belongs to the DEAD box helicase family. DEAH subfamily. DDX16/PRP8 sub-subfamily. In terms of assembly, component of pre-catalytic spliceosome complexes.

It localises to the nucleus. Its subcellular location is the nucleoplasm. It carries out the reaction ATP + H2O = ADP + phosphate + H(+). Required for pre-mRNA splicing as component of the spliceosome. Contributes to pre-mRNA splicing after spliceosome formation and prior to the first transesterification reaction. The polypeptide is Putative pre-mRNA-splicing factor ATP-dependent RNA helicase DHX16 (dhx16) (Dictyostelium discoideum (Social amoeba)).